Here is a 349-residue protein sequence, read N- to C-terminus: Quinone oxidoreductase-like protein 1 (349 aa).

This sequence belongs to the zinc-containing alcohol dehydrogenase family. Quinone oxidoreductase subfamily. In terms of assembly, homodimer. Component of the FERRY complex composed of five subunits, TBCK, PPP1R21, FERRY3, CRYZL1 and GATD1 with a ratio of 1:2:1:2:4, respectively. In terms of tissue distribution, ubiquitous.

Its subcellular location is the early endosome. Component of the FERRY complex (Five-subunit Endosomal Rab5 and RNA/ribosome intermediary). The FERRY complex directly interacts with mRNAs and RAB5A, and functions as a RAB5A effector involved in the localization and the distribution of specific mRNAs most likely by mediating their endosomal transport. The complex recruits mRNAs and ribosomes to early endosomes through direct mRNA-interaction. The protein is Quinone oxidoreductase-like protein 1 (CRYZL1) of Homo sapiens (Human).